Here is a 297-residue protein sequence, read N- to C-terminus: 4-diphosphocytidyl-2-C-methyl-D-erythritol kinase (297 aa).

The active site involves K6. 94 to 104 (PVAGGMAGGSA) serves as a coordination point for ATP. D136 is a catalytic residue.

It belongs to the GHMP kinase family. IspE subfamily.

It catalyses the reaction 4-CDP-2-C-methyl-D-erythritol + ATP = 4-CDP-2-C-methyl-D-erythritol 2-phosphate + ADP + H(+). It participates in isoprenoid biosynthesis; isopentenyl diphosphate biosynthesis via DXP pathway; isopentenyl diphosphate from 1-deoxy-D-xylulose 5-phosphate: step 3/6. Functionally, catalyzes the phosphorylation of the position 2 hydroxy group of 4-diphosphocytidyl-2C-methyl-D-erythritol. In Nocardioides sp. (strain ATCC BAA-499 / JS614), this protein is 4-diphosphocytidyl-2-C-methyl-D-erythritol kinase.